We begin with the raw amino-acid sequence, 353 residues long: Photosystem II protein D1 (353 aa).

An N-acetylthreonine modification is found at T2. At T2 the chain carries Phosphothreonine. 3 helical membrane passes run 29-46 (YIGW…TATS), 118-133 (HFLL…EWEL), and 142-156 (WIAV…AAAA). H118 serves as a coordination point for chlorophyll a. Y126 is a pheophytin a binding site. The [CaMn4O5] cluster site is built by D170 and E189. Residues 197 to 218 (FHMLGVAGVFGGSLFSAMHGSL) traverse the membrane as a helical segment. Position 198 (H198) interacts with chlorophyll a. Residues H215 and 264 to 265 (SF) contribute to the a quinone site. Position 215 (H215) interacts with Fe cation. H272 contributes to the Fe cation binding site. A helical transmembrane segment spans residues 274–288 (FLAAWPVVGIWFTAL). 4 residues coordinate [CaMn4O5] cluster: H332, E333, D342, and A344. Positions 345–353 (SVDAPSING) are excised as a propeptide.

This sequence belongs to the reaction center PufL/M/PsbA/D family. PSII is composed of 1 copy each of membrane proteins PsbA, PsbB, PsbC, PsbD, PsbE, PsbF, PsbH, PsbI, PsbJ, PsbK, PsbL, PsbM, PsbT, PsbX, PsbY, PsbZ, Psb30/Ycf12, at least 3 peripheral proteins of the oxygen-evolving complex and a large number of cofactors. It forms dimeric complexes. Requires The D1/D2 heterodimer binds P680, chlorophylls that are the primary electron donor of PSII, and subsequent electron acceptors. It shares a non-heme iron and each subunit binds pheophytin, quinone, additional chlorophylls, carotenoids and lipids. D1 provides most of the ligands for the Mn4-Ca-O5 cluster of the oxygen-evolving complex (OEC). There is also a Cl(-1) ion associated with D1 and D2, which is required for oxygen evolution. The PSII complex binds additional chlorophylls, carotenoids and specific lipids. as cofactor. In terms of processing, tyr-161 forms a radical intermediate that is referred to as redox-active TyrZ, YZ or Y-Z. C-terminally processed by CTPA; processing is essential to allow assembly of the oxygen-evolving complex and thus photosynthetic growth.

It localises to the plastid. The protein resides in the chloroplast thylakoid membrane. The enzyme catalyses 2 a plastoquinone + 4 hnu + 2 H2O = 2 a plastoquinol + O2. Its function is as follows. Photosystem II (PSII) is a light-driven water:plastoquinone oxidoreductase that uses light energy to abstract electrons from H(2)O, generating O(2) and a proton gradient subsequently used for ATP formation. It consists of a core antenna complex that captures photons, and an electron transfer chain that converts photonic excitation into a charge separation. The D1/D2 (PsbA/PsbD) reaction center heterodimer binds P680, the primary electron donor of PSII as well as several subsequent electron acceptors. In Adiantum capillus-veneris (Maidenhair fern), this protein is Photosystem II protein D1.